Reading from the N-terminus, the 1071-residue chain is Exportin-1 (1071 aa).

The necessary for HTLV-1 Rex-mediated mRNA export stretch occupies residues 1–679 (MPAIMTMLAD…QQATKNVDIL (679 aa)). The Importin N-terminal domain maps to 46–112 (AQEVLTHLKE…KKYVVGLIIK (67 aa)). HEAT repeat units lie at residues 217–240 (QNAPLVHATLETLLRFLNWIPLGY), 241–277 (IFETKLISTLIYKFLNVPMFRNVSLKCLTEIAGVSVS), 354–472 (MLLV…YVDT), 515–553 (RFLVTVIKDLLGLCEQKRGKDNKAIIASNIMYIVGQYPR), 560–597 (KFLKTVVNKLFEFMHETHDGVQDMACDTFIKIAQKCRR), and 602–639 (VQVGEVMPFIDEILNNINTIICDLQPQQVHTFYEAVGY). Residues 327 to 450 (CTFLKEHDQL…VREFMKDTDS (124 aa)) are interaction with Ran and nuclear export complex formation. Ser391 is subject to Phosphoserine. The necessary for HTLV-1 Rex multimerization stretch occupies residues 411-414 (PMLF). The interval 411 to 481 (PMLFKVRLLM…TERIMTEKLH (71 aa)) is interaction with RANBP3. The residue at position 446 (Lys446) is an N6-acetyllysine. The residue at position 448 (Thr448) is a Phosphothreonine. Ser450 bears the Phosphoserine mark. At Tyr454 the chain carries Phosphotyrosine. N6-acetyllysine is present on Lys693. 4 HEAT repeats span residues 775-813 (NFVPPLLDAVLIDYQRNVPAAREPEVLSTMAIIVNKLGG), 885-916 (TMRNVADTGLQILFTLLQNVAQEEAAAQSFYQ), 917-954 (TYFCDILQHIFSVVTDTSHTAGLTMHASILAYMFNLVE), and 1002-1039 (FSLNQDIPAFKEHLRDFLVQIKEFAGEDTSDLFLEERE). Residues 800–820 (VLSTMAIIVNKLGGHITAEIP) are interaction with HIV-1 Rev. Residue Ser1031 is modified to Phosphoserine.

It belongs to the exportin family. Found in a U snRNA export complex with PHAX/RNUXA, NCBP1/CBP80, NCBP2/CBP20, RAN, XPO1 and m7G-capped RNA. Component of a nuclear export receptor complex composed of KPNB1, RAN, SNUPN and XPO1. Found in a trimeric export complex with SNUPN, RAN and XPO1. Found in a nuclear export complex with RANBP3 and RAN. Found in a 60S ribosomal subunit export complex with NMD3, RAN, XPO1. Interacts with DDX3X, NMD3, NUP42, NUP88, NUP214, RANBP3 and TERT. Interacts with NEMF (via its N-terminus). Interacts with the monomeric form of BIRC5/survivin deacetylated at 'Lys-129'. Interacts with DTNBP1 and SERTAD2; the interactions translocate DTNBP1 and SERTAD2 out of the nucleus. Interacts with ATF2. Interacts with SLC35G1 and STIM1. Interacts with DCAF8. Interacts with CPEB3. Interacts with HAX1. Interacts with BOK; translocates to the cytoplasm. Interacts with HSP90AB1. Interacts with LRPPRC; interacts with LRPPRC alone and also when LRPPRC is in complex with EIF4E and with EIF4E sensitivity element (4ESE)-containing mRNAs to form an EIF4E-dependent mRNA export complex. In terms of assembly, (Microbial infection) Interacts with HIV-1 Rev. As to quaternary structure, (Microbial infection) Interacts with HTLV-1 Rex. (Microbial infection) Interacts with influenza A nucleoprotein. In terms of assembly, (Microbial infection) Interacts with Epstein-Barr virus protein BMLF1. As to quaternary structure, (Microbial infection) Part of a tetrameric complex composed of CRM1, importin alpha/beta dimer and the Venezuelan equine encephalitis virus (VEEV) capsid; this complex blocks the receptor-mediated transport through the nuclear pore. (Microbial infection) Interacts with SARS-CoV virus protein ORF9b; this interaction mediates protein ORF9b export out of the nucleus. In terms of tissue distribution, expressed in heart, brain, placenta, lung, liver, skeletal muscle, pancreas, spleen, thymus, prostate, testis, ovary, small intestine, colon and peripheral blood leukocytes. Not expressed in the kidney.

It localises to the cytoplasm. The protein resides in the nucleus. Its subcellular location is the nucleoplasm. The protein localises to the cajal body. It is found in the nucleolus. Its function is as follows. Mediates the nuclear export of cellular proteins (cargos) bearing a leucine-rich nuclear export signal (NES) and of RNAs. In the nucleus, in association with RANBP3, binds cooperatively to the NES on its target protein and to the GTPase RAN in its active GTP-bound form (Ran-GTP). Docking of this complex to the nuclear pore complex (NPC) is mediated through binding to nucleoporins. Upon transit of a nuclear export complex into the cytoplasm, disassembling of the complex and hydrolysis of Ran-GTP to Ran-GDP (induced by RANBP1 and RANGAP1, respectively) cause release of the cargo from the export receptor. The directionality of nuclear export is thought to be conferred by an asymmetric distribution of the GTP- and GDP-bound forms of Ran between the cytoplasm and nucleus. Involved in U3 snoRNA transport from Cajal bodies to nucleoli. Binds to late precursor U3 snoRNA bearing a TMG cap. Functionally, (Microbial infection) Mediates the export of unspliced or incompletely spliced RNAs out of the nucleus from different viruses including HIV-1, HTLV-1 and influenza A. Interacts with, and mediates the nuclear export of HIV-1 Rev and HTLV-1 Rex proteins. Involved in HTLV-1 Rex multimerization. This chain is Exportin-1 (XPO1), found in Homo sapiens (Human).